The sequence spans 447 residues: Beclin-2 (447 aa).

Positions 169–228 (EALHAELCAELSSLEQEEARLTQELEDLDGHHARVAAELRAAQAESKELYKQHEQHRVEY) form a coiled coil. A required for homodimer formation region spans residues 186–256 (EARLTQELED…NQLTYALSQQ (71 aa)).

Belongs to the beclin family. In terms of assembly, homodimer (via coiled-coil domain). Interacts (via coiled-coil domain) with ATG14 (via coiled-coil domain); this interaction is tighter than BECN2 self-association. Interacts with AMBRA1, UVRAG and PIK3C3/VPS34; these interactions are not disrupted by starvation. Does not interact with RUBCN. Interacts (via N-terminus) with GPRASP1/GASP1; the interaction is direct. As to expression, expressed in brain, skeletal muscle, placenta, thymus and uterus. Expressed at a lower level in liver, testis, stomach, and 17-day-old embryos.

It localises to the cytoplasm. Functionally, involved in 2 distinct lysosomal degradation pathways: acts as a regulator of autophagy and as a regulator of G-protein coupled receptors turnover. Regulates degradation in lysosomes of a variety of G-protein coupled receptors via its interaction with GPRASP1/GASP1. The polypeptide is Beclin-2 (Mus musculus (Mouse)).